A 201-amino-acid chain; its full sequence is MASKVVTGVVKTTAGGVVPVSQKYTVQSVGVWERIRRAFAIDPNRSNGVPLVPYNRNPSPGSLDPLAYDDPVTIPAGDIADNPYWKRDARRNYPRLSVVGQAEAVALLSVGSASHPRVELVGENGSKQLVAAQEAGKTGGLAKYFEGTGVEAGKLVLAETGGLPPLPSGEKLGEGGKWDVYKYQLAEEPSYSEAYPCRSFS.

As to quaternary structure, complex I is composed of about 40 different subunits.

Its subcellular location is the mitochondrion inner membrane. The catalysed reaction is a ubiquinone + NADH + 5 H(+)(in) = a ubiquinol + NAD(+) + 4 H(+)(out). Functionally, transfer of electrons from NADH to the respiratory chain. The immediate electron acceptor for the enzyme is believed to be ubiquinone. The sequence is that of NADH-ubiquinone oxidoreductase 21.3 kDa subunit from Neurospora crassa (strain ATCC 24698 / 74-OR23-1A / CBS 708.71 / DSM 1257 / FGSC 987).